The following is a 244-amino-acid chain: Lipoprotein-releasing system ATP-binding protein LolD (244 aa).

The 226-residue stretch at 19–244 (IRAEALAKTY…KLRELAPSAV (226 aa)) folds into the ABC transporter domain. 55-62 (GASGAGKS) contributes to the ATP binding site.

It belongs to the ABC transporter superfamily. Lipoprotein translocase (TC 3.A.1.125) family. In terms of assembly, the complex is composed of two ATP-binding proteins (LolD) and two transmembrane proteins (LolC and LolE).

It localises to the cell inner membrane. Part of the ABC transporter complex LolCDE involved in the translocation of mature outer membrane-directed lipoproteins, from the inner membrane to the periplasmic chaperone, LolA. Responsible for the formation of the LolA-lipoprotein complex in an ATP-dependent manner. This chain is Lipoprotein-releasing system ATP-binding protein LolD, found in Xanthomonas axonopodis pv. citri (strain 306).